A 463-amino-acid chain; its full sequence is Quinolone resistance protein NorB (463 aa).

A run of 14 helical transmembrane segments spans residues 17–37 (IGIVLSVITFWLFAQSLVNVV), 53–73 (IAVSITALFSGMFVVGAGGLA), 86–106 (IILNILGSLLIIISNIPLLLI), 107–127 (IGRLIQGLSAACIMPATLSII), 142–162 (YWSIGSWGGSGVCSFFGGAVA), 165–185 (LGWRWIFILSIIISLIALFLI), 201–221 (FDIKGLVLLVIMLLSLNILIT), 230–250 (SLLFITLLAIAIGSFSLFIVL), 273–293 (TASNFLLNGVAGTLIVANTFV), 299–319 (YSSLQAGSLSITYLVMVLIMI), 334–354 (PMLIGTGVLIVGECLISLTFL), 357–377 (IFYVICCIIGYLFFGLGLGIY), 403–423 (MASALGGAFGVALSGAVYAIV), and 435–455 (IALWLNAAMGILSFVIILLLV).

Belongs to the major facilitator superfamily. TCR/Tet family.

Its subcellular location is the cell membrane. In terms of biological role, multidrug efflux pump that acts independently of NorA and is one of the factors that confers resistance against diverse quinolones and chemical compounds. In Staphylococcus aureus (strain COL), this protein is Quinolone resistance protein NorB (norB).